A 47-amino-acid chain; its full sequence is Variabilin (47 aa).

The short motif at 32-34 is the Cell attachment site element; sequence RGD.

In terms of processing, contains 2 disulfide bonds. As to expression, expressed in salivary glands.

It localises to the secreted. Functionally, potently inhibits platelet aggregation induced by ADP (IC(50)=157 nM, complete inhibition at 514 nM). Also inhibits platelet aggregation induced by collagen and by the thrombin receptor peptide SFLLRNP. Is a potent antagonist of the fibrinogen receptor glycoprotein IIb-IIIa (ITGA2B/ITGB3) and the vitronectin receptor alpha-v/beta-3 (ITGAV/ITGB3). The sequence is that of Variabilin from Dermacentor variabilis (American dog tick).